The sequence spans 188 residues: Ras-related protein Rap-1 (188 aa).

12–19 (GSGGVGKS) is a binding site for GTP. Positions 34–42 (YDPTIEDSY) match the Effector region motif. GTP contacts are provided by residues 59–63 (DTAGT) and 118–121 (NKCD). Cysteine 185 is modified (cysteine methyl ester). Residue cysteine 185 is the site of S-geranylgeranyl cysteine attachment. A propeptide spans 186–188 (ILL) (removed in mature form).

The protein belongs to the small GTPase superfamily. Ras family.

The protein resides in the cell membrane. The catalysed reaction is GTP + H2O = GDP + phosphate + H(+). This is Ras-related protein Rap-1 (RAP1) from Physarum polycephalum (Slime mold).